The sequence spans 203 residues: Calcineurin B-like protein 5 (203 aa).

Gly2 carries the N-myristoyl glycine lipid modification. EF-hand domains lie at 30–65 (EVEVLHGLFIKLTSCLSNDNLLTKEKFQFILIKNTK), 66–101 (KRSLSAERIFGLFDMRNDGAIDFGEFVHTLNIFHPN), 103–138 (SPRDKAIFAFRLYDTRETGFIEPEEVKEMIIDVLEE), and 147–182 (IIDSIVSKTFEEADWKKDGIIDLEEWENFVATYPLT).

The protein belongs to the calcineurin regulatory subunit family. As to quaternary structure, homodimer. Interacts with PP2CA, CIPK2, CIPK11, CIPK23 and CIPK24. In terms of processing, both N-myristoylation and calcium-mediated conformational changes are essential for its function. Expressed in green tissues, but not in the roots.

The protein localises to the cytoplasm. It localises to the nucleus. In terms of biological role, acts as a calcium sensor. CBL proteins interact with CIPK serine-threonine protein kinases. Binding of a CBL protein to the regulatory NAF domain of a CIPK protein lead to the activation of the kinase in a calcium-dependent manner. May function as a positive regulator of salt or drought responses. In Arabidopsis thaliana (Mouse-ear cress), this protein is Calcineurin B-like protein 5 (CBL5).